Here is a 144-residue protein sequence, read N- to C-terminus: D-aminoacyl-tRNA deacylase (144 aa).

The Gly-cisPro motif, important for rejection of L-amino acids signature appears at 137–138 (GP).

The protein belongs to the DTD family. In terms of assembly, homodimer.

It localises to the cytoplasm. It carries out the reaction glycyl-tRNA(Ala) + H2O = tRNA(Ala) + glycine + H(+). The enzyme catalyses a D-aminoacyl-tRNA + H2O = a tRNA + a D-alpha-amino acid + H(+). Functionally, an aminoacyl-tRNA editing enzyme that deacylates mischarged D-aminoacyl-tRNAs. Also deacylates mischarged glycyl-tRNA(Ala), protecting cells against glycine mischarging by AlaRS. Acts via tRNA-based rather than protein-based catalysis; rejects L-amino acids rather than detecting D-amino acids in the active site. By recycling D-aminoacyl-tRNA to D-amino acids and free tRNA molecules, this enzyme counteracts the toxicity associated with the formation of D-aminoacyl-tRNA entities in vivo and helps enforce protein L-homochirality. The polypeptide is D-aminoacyl-tRNA deacylase (Marinomonas sp. (strain MWYL1)).